We begin with the raw amino-acid sequence, 218 residues long: Ras-related protein Rab-27B (218 aa).

T2 is subject to N-acetylthreonine. Residue 16 to 24 (GDSGVGKTT) participates in GTP binding. Residues 38 to 46 (FITTVGIDF) carry the Effector region motif. Residues 74–78 (DTAGQ), 133–136 (NKAD), and 163–165 (SAA) each bind GTP. C123 and C188 are disulfide-bonded. Residues 193–218 (HIPDTVNGSSSGKLDGEKSAEKKCAC) form a disordered region. Residues 206 to 218 (LDGEKSAEKKCAC) show a composition bias toward basic and acidic residues. Residues C216 and C218 are each lipidated (S-geranylgeranyl cysteine). C218 carries the cysteine methyl ester modification.

Belongs to the small GTPase superfamily. Rab family. In terms of assembly, interacts with SYTL2, SYTL4, MYRIP and MLPH. Interacts with RPH3A and RPH3A. Interacts (GDP-bound form preferentially) with DENND10. As to expression, expressed at an extraordinary high level (0.1% of total protein) in urothelium.

The protein localises to the membrane. It is found in the late endosome. It catalyses the reaction GTP + H2O = GDP + phosphate + H(+). Its activity is regulated as follows. Regulated by guanine nucleotide exchange factors (GEFs) which promote the exchange of bound GDP for free GTP, GTPase activating proteins (GAPs) which increase the GTP hydrolysis activity, and GDP dissociation inhibitors which inhibit the dissociation of the nucleotide from the GTPase. Activated by GEFs such as DENND10. Small GTPase which cycles between active GTP-bound and inactive GDP-bound states. In its active state, binds to a variety of effector proteins to regulate homeostasis of late endocytic pathway, including endosomal positioning, maturation and secretion. Plays a role in NTRK2/TRKB axonal anterograde transport by facilitating the association of NTRK2/TRKB with KLC1. May be involved in targeting uroplakins to urothelial apical membranes. In Bos taurus (Bovine), this protein is Ras-related protein Rab-27B (RAB27B).